The sequence spans 397 residues: Succinate--CoA ligase [ADP-forming] subunit beta (397 aa).

One can recognise an ATP-grasp domain in the interval 9–254 (KALLKGYGAP…ETEEDAKEIE (246 aa)). ATP is bound by residues Lys46, 53-55 (GRG), Glu109, Ala112, and Glu117. Mg(2+)-binding residues include Asn209 and Asp223. Substrate is bound by residues Asn274 and 331-333 (GIM).

Belongs to the succinate/malate CoA ligase beta subunit family. Heterotetramer of two alpha and two beta subunits. Mg(2+) serves as cofactor.

The catalysed reaction is succinate + ATP + CoA = succinyl-CoA + ADP + phosphate. It carries out the reaction GTP + succinate + CoA = succinyl-CoA + GDP + phosphate. It participates in carbohydrate metabolism; tricarboxylic acid cycle; succinate from succinyl-CoA (ligase route): step 1/1. Its function is as follows. Succinyl-CoA synthetase functions in the citric acid cycle (TCA), coupling the hydrolysis of succinyl-CoA to the synthesis of either ATP or GTP and thus represents the only step of substrate-level phosphorylation in the TCA. The beta subunit provides nucleotide specificity of the enzyme and binds the substrate succinate, while the binding sites for coenzyme A and phosphate are found in the alpha subunit. This Rhizobium leguminosarum bv. trifolii (strain WSM2304) protein is Succinate--CoA ligase [ADP-forming] subunit beta.